We begin with the raw amino-acid sequence, 103 residues long: Defensin-like protein 290 (103 aa).

A signal peptide spans Met-1–Ala-29. Cystine bridges form between Cys-33/Cys-50, Cys-39/Cys-55, Cys-43/Cys-57, Cys-72/Cys-92, Cys-78/Cys-98, and Cys-84/Cys-100.

The protein belongs to the DEFL family.

It is found in the secreted. This chain is Defensin-like protein 290, found in Arabidopsis thaliana (Mouse-ear cress).